The primary structure comprises 423 residues: NADP-specific glutamate dehydrogenase (423 aa).

Residue lysine 112 is part of the active site.

Belongs to the Glu/Leu/Phe/Val dehydrogenases family. Homohexamer.

It catalyses the reaction L-glutamate + NADP(+) + H2O = 2-oxoglutarate + NH4(+) + NADPH + H(+). In Saccharolobus shibatae (strain ATCC 51178 / DSM 5389 / JCM 8931 / NBRC 15437 / B12) (Sulfolobus shibatae), this protein is NADP-specific glutamate dehydrogenase (gdhA).